The following is a 217-amino-acid chain: Uridine kinase (217 aa).

17 to 24 (GASASGKS) is an ATP binding site.

The protein belongs to the uridine kinase family.

The protein localises to the cytoplasm. The catalysed reaction is uridine + ATP = UMP + ADP + H(+). It carries out the reaction cytidine + ATP = CMP + ADP + H(+). The protein operates within pyrimidine metabolism; CTP biosynthesis via salvage pathway; CTP from cytidine: step 1/3. It functions in the pathway pyrimidine metabolism; UMP biosynthesis via salvage pathway; UMP from uridine: step 1/1. In Haemophilus ducreyi (strain 35000HP / ATCC 700724), this protein is Uridine kinase.